The following is a 142-amino-acid chain: NTF2-related export protein 2 (142 aa).

The NTF2 domain occupies 17 to 136 (AAEEFVNIYY…WKIASDCFRF (120 aa)).

As to quaternary structure, associates with NXF1, NXF2, NXF3 and NXF5.

It localises to the nucleus. The protein resides in the cytoplasm. Regulator of protein export for NES-containing proteins. Also plays a role in mRNA nuclear export. The polypeptide is NTF2-related export protein 2 (NXT2) (Bos taurus (Bovine)).